Consider the following 396-residue polypeptide: Dimethyladenosine transferase 2, mitochondrial (396 aa).

The N-terminal 43 residues, 1–43, are a transit peptide targeting the mitochondrion; that stretch reads MRGPAMRLPPRIALSALARGPSCILGSGAATRKDWQTRNRRGF. The interval 43–71 is disordered; that stretch reads FSDFNIEPLPDSDLEESSPWTSRNRSEPT. Positions 74, 123, and 149 each coordinate S-adenosyl-L-methionine. A DNA-binding region spans residues 328–329; sequence KR.

It belongs to the class I-like SAM-binding methyltransferase superfamily. rRNA adenine N(6)-methyltransferase family. KsgA subfamily. Homodimer. Component of the mitochondrial transcription initiation complex, composed at least of TFB2M, TFAM and POLRMT. In this complex TFAM recruits POLRMT to the promoter whereas TFB2M induces structural changes in POLRMT to enable promoter opening and trapping of the DNA non-template strand. Interacts with mitochondrial RNA polymerase POLRMT. Interacts with TFAM. As to expression, ubiquitously expressed.

Its subcellular location is the mitochondrion. It carries out the reaction adenosine in rRNA + S-adenosyl-L-methionine = N(6)-methyladenosine in rRNA + S-adenosyl-L-homocysteine + H(+). S-adenosyl-L-methionine-dependent rRNA methyltransferase which may methylate two specific adjacent adenosines in the loop of a conserved hairpin near the 3'-end of 12S mitochondrial rRNA. Component of the mitochondrial transcription initiation complex, composed at least of TFB2M, TFAM and POLRMT that is required for basal transcription of mitochondrial DNA. In this complex, TFAM recruits POLRMT to a specific promoter whereas TFB2M induces structural changes in POLRMT to enable promoter opening and trapping of the DNA non-template strand. Stimulates transcription independently of the methyltransferase activity. The sequence is that of Dimethyladenosine transferase 2, mitochondrial from Mus musculus (Mouse).